The chain runs to 97 residues: Large ribosomal subunit protein uL23 (97 aa).

It belongs to the universal ribosomal protein uL23 family. As to quaternary structure, part of the 50S ribosomal subunit. Contacts protein L29, and trigger factor when it is bound to the ribosome.

In terms of biological role, one of the early assembly proteins it binds 23S rRNA. One of the proteins that surrounds the polypeptide exit tunnel on the outside of the ribosome. Forms the main docking site for trigger factor binding to the ribosome. The protein is Large ribosomal subunit protein uL23 of Rhizobium rhizogenes (strain K84 / ATCC BAA-868) (Agrobacterium radiobacter).